We begin with the raw amino-acid sequence, 638 residues long: Cytoplasmic dynein 1 intermediate chain 2 (638 aa).

Composition is skewed to basic and acidic residues over residues 1–13 (MSDK…ELER) and 20–43 (QIRE…KKEA). Disordered stretches follow at residues 1-135 (MSDK…GRGP) and 155-214 (TYTK…EEKQ). S2 carries the N-acetylserine modification. S51 is modified (diphosphoserine). Phosphoserine occurs at positions 51, 73, 81, 84, and 90. Low complexity predominate over residues 88–97 (PSSKSVSTPS). Phosphothreonine is present on T95. 3 positions are modified to phosphoserine: S97, S101, and S104. A compositionally biased stretch (basic and acidic residues) spans 190 to 214 (EKTLKKDEENDSKAPPHELTEEEKQ). WD repeat units lie at residues 277–326 (SKHR…TTPE), 330–370 (HCQS…RTPV), 379–420 (AHTH…HPQD), 429–469 (SKAV…AGIS), 474–519 (GHQG…PLYS), 522–562 (DNAD…EVPT), and 568–607 (EGNP…AVPR).

This sequence belongs to the dynein intermediate chain family. As to quaternary structure, homodimer. The cytoplasmic dynein 1 complex consists of two catalytic heavy chains (HCs) and a number of non-catalytic subunits presented by intermediate chains (ICs), light intermediate chains (LICs) and light chains (LCs); the composition seems to vary in respect to the IC, LIC and LC composition. The heavy chain homodimer serves as a scaffold for the probable homodimeric assembly of the respective non-catalytic subunits. The ICs and LICs bind directly to the HC dimer and the LCs assemble on the IC dimer. Interacts with DYNLT3. Interacts with DYNLT1. Interacts (dephosphorylated at Ser-90) with DCTN1. Interacts with BICD2. Interacts with SPEF2. Interacts with CFAP61. (Microbial infection) Interacts with human adenovirus 5 hexon protein; this interaction probably allows virus intracellular transport. In terms of processing, the phosphorylation status of Ser-90 appears to be involved in dynactin-dependent target binding. Post-translationally, pyrophosphorylation by 5-diphosphoinositol pentakisphosphate (5-IP7) promotes interaction with DCTN1. Serine pyrophosphorylation is achieved by Mg(2+)-dependent, but enzyme independent transfer of a beta-phosphate from a inositol pyrophosphate to a pre-phosphorylated serine residue.

It is found in the cytoplasm. It localises to the cytoskeleton. Functionally, acts as one of several non-catalytic accessory components of the cytoplasmic dynein 1 complex that are thought to be involved in linking dynein to cargos and to adapter proteins that regulate dynein function. Cytoplasmic dynein 1 acts as a motor for the intracellular retrograde motility of vesicles and organelles along microtubules. The intermediate chains mediate the binding of dynein to dynactin via its 150 kDa component (p150-glued) DCTN1. Involved in membrane-transport, such as Golgi apparatus, late endosomes and lysosomes. The polypeptide is Cytoplasmic dynein 1 intermediate chain 2 (Homo sapiens (Human)).